Consider the following 108-residue polypeptide: Structural protein 1 (108 aa).

The disordered stretch occupies residues 1–20 (MSRVSEYGVPEGVRESDSDT). Topologically, residues 1 to 77 (MSRVSEYGVP…LKMQMDRLCN (77 aa)) are intravirion. The chain crosses the membrane as a helical; Signal-anchor for type II membrane protein span at residues 78–98 (VLGVVLQMATLALVTYIAFVV). At 99–108 (HTRATSCKRE) the chain is on the virion surface side.

This sequence belongs to the varicellovirus ORF1 protein family. As to quaternary structure, homodimer. Post-translationally, phosphorylated.

It localises to the virion membrane. The protein localises to the host Golgi apparatus membrane. The protein is Structural protein 1 of Varicella-zoster virus (strain Dumas) (HHV-3).